The chain runs to 187 residues: Probable chemoreceptor glutamine deamidase CheD 1 (187 aa).

Belongs to the CheD family.

The enzyme catalyses L-glutaminyl-[protein] + H2O = L-glutamyl-[protein] + NH4(+). Functionally, probably deamidates glutamine residues to glutamate on methyl-accepting chemotaxis receptors (MCPs), playing an important role in chemotaxis. In Ruegeria sp. (strain TM1040) (Silicibacter sp.), this protein is Probable chemoreceptor glutamine deamidase CheD 1.